The following is a 191-amino-acid chain: Ribonuclease HII (191 aa).

One can recognise an RNase H type-2 domain in the interval I16–L191. Residues D22, E23, and D110 each contribute to the a divalent metal cation site.

It belongs to the RNase HII family. Requires Mn(2+) as cofactor. It depends on Mg(2+) as a cofactor.

It localises to the cytoplasm. It catalyses the reaction Endonucleolytic cleavage to 5'-phosphomonoester.. Its function is as follows. Endonuclease that specifically degrades the RNA of RNA-DNA hybrids. The sequence is that of Ribonuclease HII (rnhB) from Campylobacter jejuni subsp. jejuni serotype O:2 (strain ATCC 700819 / NCTC 11168).